We begin with the raw amino-acid sequence, 519 residues long: Cytochrome P450 CYP99A1 (519 aa).

Residue cysteine 453 participates in heme binding.

It belongs to the cytochrome P450 family. Heme is required as a cofactor.

The protein resides in the membrane. This is Cytochrome P450 CYP99A1 (CYP99A1) from Sorghum bicolor (Sorghum).